Here is a 223-residue protein sequence, read N- to C-terminus: 2-C-methyl-D-erythritol 4-phosphate cytidylyltransferase (223 aa).

This sequence belongs to the IspD/TarI cytidylyltransferase family. IspD subfamily.

It carries out the reaction 2-C-methyl-D-erythritol 4-phosphate + CTP + H(+) = 4-CDP-2-C-methyl-D-erythritol + diphosphate. It participates in isoprenoid biosynthesis; isopentenyl diphosphate biosynthesis via DXP pathway; isopentenyl diphosphate from 1-deoxy-D-xylulose 5-phosphate: step 2/6. Its function is as follows. Catalyzes the formation of 4-diphosphocytidyl-2-C-methyl-D-erythritol from CTP and 2-C-methyl-D-erythritol 4-phosphate (MEP). This is 2-C-methyl-D-erythritol 4-phosphate cytidylyltransferase from Prochlorococcus marinus (strain MIT 9301).